A 94-amino-acid chain; its full sequence is Integration host factor subunit beta (94 aa).

It belongs to the bacterial histone-like protein family. In terms of assembly, heterodimer of an alpha and a beta chain.

This protein is one of the two subunits of integration host factor, a specific DNA-binding protein that functions in genetic recombination as well as in transcriptional and translational control. The polypeptide is Integration host factor subunit beta (Azoarcus sp. (strain BH72)).